The chain runs to 326 residues: tRNA U34 carboxymethyltransferase (326 aa).

Lys91, Trp105, Lys110, Gly130, Met196, Tyr200, and Arg315 together coordinate carboxy-S-adenosyl-L-methionine.

It belongs to the class I-like SAM-binding methyltransferase superfamily. CmoB family. As to quaternary structure, homotetramer.

It catalyses the reaction carboxy-S-adenosyl-L-methionine + 5-hydroxyuridine(34) in tRNA = 5-carboxymethoxyuridine(34) in tRNA + S-adenosyl-L-homocysteine + H(+). Catalyzes carboxymethyl transfer from carboxy-S-adenosyl-L-methionine (Cx-SAM) to 5-hydroxyuridine (ho5U) to form 5-carboxymethoxyuridine (cmo5U) at position 34 in tRNAs. This Tolumonas auensis (strain DSM 9187 / NBRC 110442 / TA 4) protein is tRNA U34 carboxymethyltransferase.